We begin with the raw amino-acid sequence, 403 residues long: Creatinase (403 aa).

Residue His-232 is part of the active site.

The protein belongs to the peptidase M24 family. Creatinase subfamily. In terms of assembly, homodimer.

It carries out the reaction creatine + H2O = sarcosine + urea. This is Creatinase from Pseudomonas putida (Arthrobacter siderocapsulatus).